Consider the following 444-residue polypeptide: UDP-N-acetylmuramate--L-alanine ligase (444 aa).

110–116 contacts ATP; the sequence is GAHGKTS.

Belongs to the MurCDEF family.

The protein localises to the cytoplasm. The catalysed reaction is UDP-N-acetyl-alpha-D-muramate + L-alanine + ATP = UDP-N-acetyl-alpha-D-muramoyl-L-alanine + ADP + phosphate + H(+). It participates in cell wall biogenesis; peptidoglycan biosynthesis. In terms of biological role, cell wall formation. The sequence is that of UDP-N-acetylmuramate--L-alanine ligase from Streptococcus sanguinis (strain SK36).